The following is a 429-amino-acid chain: SET domain-containing protein 8 (429 aa).

In terms of domain architecture, SET spans 17 to 232 (KQITIKKIRK…ENEEVTINYG (216 aa)).

This sequence belongs to the class V-like SAM-binding methyltransferase superfamily.

It localises to the cytoplasm. The protein localises to the nucleus. This chain is SET domain-containing protein 8 (set8), found in Schizosaccharomyces pombe (strain 972 / ATCC 24843) (Fission yeast).